The following is a 403-amino-acid chain: Tyrosine--tRNA ligase (403 aa).

The 'HIGH' region motif lies at 45 to 54; it reads PTAPDLHLGH. The 'KMSKS' region motif lies at 229 to 233; the sequence is KMSKS. Lys-232 is a binding site for ATP. In terms of domain architecture, S4 RNA-binding spans 341–402; it reads VALCRLLAEA…GKRRFARITF (62 aa).

The protein belongs to the class-I aminoacyl-tRNA synthetase family. TyrS type 2 subfamily. Homodimer.

The protein localises to the cytoplasm. The enzyme catalyses tRNA(Tyr) + L-tyrosine + ATP = L-tyrosyl-tRNA(Tyr) + AMP + diphosphate + H(+). Functionally, catalyzes the attachment of tyrosine to tRNA(Tyr) in a two-step reaction: tyrosine is first activated by ATP to form Tyr-AMP and then transferred to the acceptor end of tRNA(Tyr). The protein is Tyrosine--tRNA ligase of Geobacter sulfurreducens (strain ATCC 51573 / DSM 12127 / PCA).